Consider the following 447-residue polypeptide: Tubulin beta-2 chain (447 aa).

Residues glutamine 11, glutamate 69, serine 138, glycine 142, threonine 143, glycine 144, asparagine 204, and asparagine 226 each coordinate GTP. Glutamate 69 lines the Mg(2+) pocket. The disordered stretch occupies residues 419–447 (VSEYQQYQDATADDEGEYEDEEEEADLQD). The span at 429–447 (TADDEGEYEDEEEEADLQD) shows a compositional bias: acidic residues.

This sequence belongs to the tubulin family. In terms of assembly, dimer of alpha and beta chains. A typical microtubule is a hollow water-filled tube with an outer diameter of 25 nm and an inner diameter of 15 nM. Alpha-beta heterodimers associate head-to-tail to form protofilaments running lengthwise along the microtubule wall with the beta-tubulin subunit facing the microtubule plus end conferring a structural polarity. Microtubules usually have 13 protofilaments but different protofilament numbers can be found in some organisms and specialized cells. Mg(2+) serves as cofactor. In terms of tissue distribution, expressed in leaf sheaths and suspension cultured cells.

It localises to the cytoplasm. The protein resides in the cytoskeleton. Its function is as follows. Tubulin is the major constituent of microtubules, a cylinder consisting of laterally associated linear protofilaments composed of alpha- and beta-tubulin heterodimers. Microtubules grow by the addition of GTP-tubulin dimers to the microtubule end, where a stabilizing cap forms. Below the cap, tubulin dimers are in GDP-bound state, owing to GTPase activity of alpha-tubulin. This is Tubulin beta-2 chain (TUBB2) from Oryza sativa subsp. japonica (Rice).